The sequence spans 269 residues: Regulatory protein RecX (269 aa).

This sequence belongs to the RecX family.

Its subcellular location is the cytoplasm. Modulates RecA activity. This Listeria monocytogenes serotype 4a (strain HCC23) protein is Regulatory protein RecX.